A 396-amino-acid chain; its full sequence is dTDP-epi-vancosaminyltransferase (396 aa).

10-12 (SRG) contacts dTDP-beta-L-4-epi-vancosamine. The devancoaminyl-vancomycin site is built by Asp127, Gln133, Tyr141, and Tyr169. Residues Arg207, Ser230, 277–278 (EV), and 293–298 (HDSAGT) contribute to the dTDP-beta-L-4-epi-vancosamine site.

The protein belongs to the glycosyltransferase 28 family.

It carries out the reaction dTDP-beta-L-4-epi-vancosamine + devancoaminyl-vancomycin = chloroorienticin B + dTDP + H(+). It functions in the pathway antibiotic biosynthesis; vancomycin biosynthesis. Catalyzes the attachment of 4-epi-vancosamine from a TDP donor to the beta-OH-Tyr-6 of the aglycone cosubstrate in the biosynthesis of glycopeptide antibiotic chloroeremomycin, a member of the vancomycin group of antibiotics. Strongly prefers devancoaminyl-vancomycin (DVV) as substrate rather than the heptapeptide vancomycin aglycone (AGV). Acts downstream of GtfB. This is dTDP-epi-vancosaminyltransferase (gtfA) from Amycolatopsis orientalis (Nocardia orientalis).